The sequence spans 1553 residues: Dual oxidase 1 (1553 aa).

A signal peptide spans 1–21 (MGFRLALAWTLLVGPWMPMGA). Topologically, residues 22–596 (RNSISWEVQR…YFKGSGFGFG (575 aa)) are extracellular. The segment at 26–593 (SWEVQRFDGW…MRDYFKGSGF (568 aa)) is peroxidase-like; mediates peroxidase activity. 4 N-linked (GlcNAc...) asparagine glycosylation sites follow: N94, N342, N354, and N534. Residues 597–617 (VTIGTLCCFPLVSLLSAWIVA) traverse the membrane as a helical segment. Topologically, residues 618–1046 (QLRRRNFKRL…KRFVENYRRH (429 aa)) are cytoplasmic. EF-hand domains lie at 815–850 (PQDMFVESMFSLADKDGNGYLSFREFLDILVVFMKG), 851–886 (SPEEKSRLMFRMYDFDGNGLISKDEFIRMLRSFIEI), and 895–930 (QLTEVVESMFREAGFQDKQELTWEDFHFMLRDHDSE). Positions 828, 830, 832, 834, 839, 864, 866, 868, and 875 each coordinate Ca(2+). Positions 956-1250 (YISQEKLCPS…GSFALIQLPR (295 aa)) are interaction with TXNDC11. A helical membrane pass occupies residues 1047-1067 (IGCLAVFYTIAGGLFLERAYY). The Extracellular segment spans residues 1068–1082 (YAFAAHHMGITDTTR). A helical membrane pass occupies residues 1083–1103 (VGIILSRGTAASISFMFSYIL). A Ferric oxidoreductase domain is found at 1089–1271 (RGTAASISFM…YVGDKLVSLS (183 aa)). At 1104–1138 (LTMCRNLITFLRETFLNRYVPFDAAVDFHRLIAST) the chain is on the cytoplasmic side. Residues 1139-1159 (AIILTVLHSAGHVVNVYLFSI) form a helical membrane-spanning segment. Over 1160 to 1190 (SPLSVLSCLFPGLFHDNGSEFPQKYYWWFFQ) the chain is Extracellular. Residues 1191 to 1211 (TVPGLTGVMLLLILAIMYVFA) traverse the membrane as a helical segment. The Cytoplasmic segment spans residues 1212-1228 (SHHFRRCSFRGFWLTHH). The chain crosses the membrane as a helical span at residues 1229-1249 (LYILLYMLLIIHGSFALIQLP). Position 1250 (R1250) is a topological domain, extracellular. Residues 1251–1271 (FHIFFLVPALIYVGDKLVSLS) traverse the membrane as a helical segment. An FAD-binding FR-type domain is found at 1272–1378 (RKKVEISVVK…DGPFGEGHQE (107 aa)). Residues 1272–1553 (RKKVEISVVK…THFSHHYENF (282 aa)) lie on the Cytoplasmic side of the membrane.

The protein in the N-terminal section; belongs to the peroxidase family. As to quaternary structure, interacts with TXNDC11, TPO and CYBA. Post-translationally, N-glycosylated. Specifically expressed in thyroid.

The protein resides in the apical cell membrane. The catalysed reaction is NADH + O2 + H(+) = H2O2 + NAD(+). The enzyme catalyses NADPH + O2 + H(+) = H2O2 + NADP(+). It functions in the pathway hormone biosynthesis; thyroid hormone biosynthesis. The NADPH oxidase activity is calcium-dependent. Peroxidase activity is inhibited by aminobenzohydrazide. Its function is as follows. Generates hydrogen peroxide which is required for the activity of thyroid peroxidase/TPO and lactoperoxidase/LPO. Plays a role in thyroid hormones synthesis and lactoperoxidase-mediated antimicrobial defense at the surface of mucosa. May have its own peroxidase activity through its N-terminal peroxidase-like domain. This Sus scrofa (Pig) protein is Dual oxidase 1 (DUOX1).